Here is a 409-residue protein sequence, read N- to C-terminus: Translation initiation factor 2 subunit gamma (409 aa).

The 197-residue stretch at 7-203 (QPEVNIGLVG…TIESEIPTPD (197 aa)) folds into the tr-type G domain. The G1 stretch occupies residues 16–23 (GHVDHGKT). Mg(2+) is bound by residues aspartate 19, threonine 23, glycine 44, and serine 46. 19-24 (DHGKTT) contacts GTP. The interval 44–48 (GISIR) is G2. Residues 90-93 (DAPG) form a G3 region. Residues 146–149 (NKID) and 181–183 (SAQ) contribute to the GTP site. Residues 146 to 149 (NKID) form a G4 region. Residues 181 to 183 (SAQ) are G5.

It belongs to the TRAFAC class translation factor GTPase superfamily. Classic translation factor GTPase family. EIF2G subfamily. As to quaternary structure, heterotrimer composed of an alpha, a beta and a gamma chain. Mg(2+) is required as a cofactor.

The enzyme catalyses GTP + H2O = GDP + phosphate + H(+). Functionally, eIF-2 functions in the early steps of protein synthesis by forming a ternary complex with GTP and initiator tRNA. In Natronomonas pharaonis (strain ATCC 35678 / DSM 2160 / CIP 103997 / JCM 8858 / NBRC 14720 / NCIMB 2260 / Gabara) (Halobacterium pharaonis), this protein is Translation initiation factor 2 subunit gamma.